The sequence spans 151 residues: UPF0178 protein Suden_0449 (151 aa).

The protein belongs to the UPF0178 family.

The chain is UPF0178 protein Suden_0449 from Sulfurimonas denitrificans (strain ATCC 33889 / DSM 1251) (Thiomicrospira denitrificans (strain ATCC 33889 / DSM 1251)).